Consider the following 94-residue polypeptide: DNA-directed RNA polymerase subunit omega (94 aa).

This sequence belongs to the RNA polymerase subunit omega family. In terms of assembly, the RNAP catalytic core consists of 2 alpha, 1 beta, 1 beta' and 1 omega subunit. When a sigma factor is associated with the core the holoenzyme is formed, which can initiate transcription.

The catalysed reaction is RNA(n) + a ribonucleoside 5'-triphosphate = RNA(n+1) + diphosphate. Promotes RNA polymerase assembly. Latches the N- and C-terminal regions of the beta' subunit thereby facilitating its interaction with the beta and alpha subunits. The protein is DNA-directed RNA polymerase subunit omega of Bifidobacterium longum (strain DJO10A).